The following is a 338-amino-acid chain: 4-hydroxy-2-oxovalerate aldolase (338 aa).

The Pyruvate carboxyltransferase domain maps to 6–256 (IHIVDTTLRD…RTGVDFYKVM (251 aa)). Substrate is bound at residue 14 to 15 (RD). Asp-15 is a binding site for Mn(2+). His-18 functions as the Proton acceptor in the catalytic mechanism. Residues Ser-168 and His-195 each coordinate substrate. Mn(2+)-binding residues include His-195 and His-197. Tyr-286 serves as a coordination point for substrate.

It belongs to the 4-hydroxy-2-oxovalerate aldolase family.

The catalysed reaction is (S)-4-hydroxy-2-oxopentanoate = acetaldehyde + pyruvate. The protein is 4-hydroxy-2-oxovalerate aldolase of Moorella thermoacetica (strain ATCC 39073 / JCM 9320).